The sequence spans 562 residues: Protein FAM222B (562 aa).

2 stretches are compositionally biased toward low complexity: residues 147 to 167 (PQAQALARQQALQHAQTLAHA) and 183 to 201 (ALSHPQSLQQPQGLGHPQQ). Disordered stretches follow at residues 147-242 (PQAQ…PPNV) and 537-562 (AHRAPGTRAPDPTDSRSLHIQHPGYR).

The protein belongs to the FAM222 family.

This is Protein FAM222B (Fam222b) from Mus musculus (Mouse).